We begin with the raw amino-acid sequence, 172 residues long: Protein GrpE (172 aa).

Low complexity predominate over residues 1 to 11 (MSEENNSQNSN). Residues 1–22 (MSEENNSQNSNPPNPENGEIAS) are disordered.

This sequence belongs to the GrpE family. Homodimer.

It is found in the cytoplasm. In terms of biological role, participates actively in the response to hyperosmotic and heat shock by preventing the aggregation of stress-denatured proteins, in association with DnaK and GrpE. It is the nucleotide exchange factor for DnaK and may function as a thermosensor. Unfolded proteins bind initially to DnaJ; upon interaction with the DnaJ-bound protein, DnaK hydrolyzes its bound ATP, resulting in the formation of a stable complex. GrpE releases ADP from DnaK; ATP binding to DnaK triggers the release of the substrate protein, thus completing the reaction cycle. Several rounds of ATP-dependent interactions between DnaJ, DnaK and GrpE are required for fully efficient folding. This chain is Protein GrpE, found in Bdellovibrio bacteriovorus (strain ATCC 15356 / DSM 50701 / NCIMB 9529 / HD100).